Reading from the N-terminus, the 751-residue chain is MTISPPEREAKKVKIVVDRNPVATNFEKWAKPGHFSRTLSKGPTTTTWIWNLHADAHDFDTQTSDLEEISRKVFSAHFGQLGIIFIWLSGMYFHGARFSNYEAWLTDPTHIKPSAQVVWPIVGQEILNADVGGGFQGLQITSGFFQLWRASGITSELQLYTTAIGGLVMAAAMFFAGWFHYHKAAPKLEWFQNVESMLNHHLAGLLGLGSLAWAGHQIHVSLPINKLLDAGVDPKEIPLPHEFLFNPELMAQLYPSFAKGLAPFFTLDWAQYSDFLTFQGGLNPVTGGLWLTDTVHHHLAIAVLFLVAGHQYRTNWGIGSSLKEILEAHKGPFTGEGHKGLYEILTTSWHAQLAINLALFGSLSIIVSHHMYAMPPYPYLATDYGTQLSLFTHHMWIGGFCIVGAGAHAGIFMVRDYDPTNNYNNLLDRVLRHRDAMISHLNWVCIFLGFHSFGLYIHNDTMSALGRPQDMFSDTAIQLQPVFAQWVQNTHFLAPGFTAPNALASTSPSWGGDVVAVGGKVAMMPISLGTADFMVHHIHAFTIHVTVLILLKGVLYARSSRLIPDKANLGFRFPCDGPGRGGTCQVSAWDHVFLGLFWMYNSISIVIFHFSWKMQSDVWGTVSANGVSHITGGNFAQSANTINGWLRDFLWAQSSQVIQSYGSALSAYGLIFLGAHFVWAFSLMFLFSGRGYWQELIESIVWAHNKLKVAPAIQPRALSITQGRAVGVAHYLLGGIATTWSFFLARILAVG.

8 helical membrane passes run 73 to 96 (VFSA…FHGA), 159 to 182 (LYTT…FHYH), 198 to 222 (LNHH…HVSL), 294 to 312 (TVHH…GHQY), 349 to 372 (WHAQ…HHMY), 388 to 414 (LSLF…IFMV), 436 to 458 (AMIS…LYIH), and 533 to 551 (FMVH…LILL). 2 residues coordinate [4Fe-4S] cluster: C575 and C584. Helical transmembrane passes span 591–612 (HVFL…HFSW) and 665–687 (LSAY…MFLF). H676 is a binding site for chlorophyll a'. Residues M684 and Y692 each coordinate chlorophyll a. Phylloquinone is bound at residue W693. A helical membrane pass occupies residues 725-745 (AVGVAHYLLGGIATTWSFFLA).

The protein belongs to the PsaA/PsaB family. The PsaA/B heterodimer binds the P700 chlorophyll special pair and subsequent electron acceptors. PSI consists of a core antenna complex that captures photons, and an electron transfer chain that converts photonic excitation into a charge separation. The eukaryotic PSI reaction center is composed of at least 11 subunits. Requires P700 is a chlorophyll a/chlorophyll a' dimer, A0 is one or more chlorophyll a, A1 is one or both phylloquinones and FX is a shared 4Fe-4S iron-sulfur center. as cofactor.

The protein resides in the plastid. Its subcellular location is the chloroplast thylakoid membrane. The catalysed reaction is reduced [plastocyanin] + hnu + oxidized [2Fe-2S]-[ferredoxin] = oxidized [plastocyanin] + reduced [2Fe-2S]-[ferredoxin]. PsaA and PsaB bind P700, the primary electron donor of photosystem I (PSI), as well as the electron acceptors A0, A1 and FX. PSI is a plastocyanin/cytochrome c6-ferredoxin oxidoreductase, converting photonic excitation into a charge separation, which transfers an electron from the donor P700 chlorophyll pair to the spectroscopically characterized acceptors A0, A1, FX, FA and FB in turn. Oxidized P700 is reduced on the lumenal side of the thylakoid membrane by plastocyanin or cytochrome c6. This is Photosystem I P700 chlorophyll a apoprotein A1 from Chlorella vulgaris (Green alga).